The chain runs to 269 residues: Ribonuclease HII (269 aa).

Positions 83–269 constitute an RNase H type-2 domain; sequence YLIAGVDEVG…HRMSFLTNIL (187 aa). Residues D89, E90, and D185 each coordinate a divalent metal cation.

Belongs to the RNase HII family. Mn(2+) serves as cofactor. The cofactor is Mg(2+).

It localises to the cytoplasm. It carries out the reaction Endonucleolytic cleavage to 5'-phosphomonoester.. Functionally, endonuclease that specifically degrades the RNA of RNA-DNA hybrids. This chain is Ribonuclease HII, found in Clostridium botulinum (strain Hall / ATCC 3502 / NCTC 13319 / Type A).